The following is a 289-amino-acid chain: ATP synthase gamma chain (289 aa).

It belongs to the ATPase gamma chain family. As to quaternary structure, F-type ATPases have 2 components, CF(1) - the catalytic core - and CF(0) - the membrane proton channel. CF(1) has five subunits: alpha(3), beta(3), gamma(1), delta(1), epsilon(1). CF(0) has three main subunits: a, b and c.

Its subcellular location is the cell inner membrane. Functionally, produces ATP from ADP in the presence of a proton gradient across the membrane. The gamma chain is believed to be important in regulating ATPase activity and the flow of protons through the CF(0) complex. This Cereibacter sphaeroides (strain ATCC 17023 / DSM 158 / JCM 6121 / CCUG 31486 / LMG 2827 / NBRC 12203 / NCIMB 8253 / ATH 2.4.1.) (Rhodobacter sphaeroides) protein is ATP synthase gamma chain.